Here is a 347-residue protein sequence, read N- to C-terminus: FK506-binding protein-like (347 aa).

A disordered region spans residues 1-24; that stretch reads METSPISPMNEKNTAQPQQREENA. T3 carries the phosphothreonine modification. TPR repeat units lie at residues 208-241, 250-283, and 284-317; these read AKEE…LLTL, TTLY…EPGH, and LKAL…DPKN.

In terms of assembly, forms a ternary complex with CDKN1A/p21 and HSP90AB1/Hsp90.

Functionally, may be involved in response to X-ray. Regulates p21 protein stability by binding to Hsp90 and p21. This Mus musculus (Mouse) protein is FK506-binding protein-like (Fkbpl).